A 317-amino-acid polypeptide reads, in one-letter code: Acetyl-coenzyme A carboxylase carboxyl transferase subunit alpha (317 aa).

The 254-residue stretch at 40 to 293 folds into the CoA carboxyltransferase C-terminal domain; it reads LEKRSADALK…GDIITASLRS (254 aa).

Belongs to the AccA family. As to quaternary structure, acetyl-CoA carboxylase is a heterohexamer composed of biotin carboxyl carrier protein (AccB), biotin carboxylase (AccC) and two subunits each of ACCase subunit alpha (AccA) and ACCase subunit beta (AccD).

The protein localises to the cytoplasm. It carries out the reaction N(6)-carboxybiotinyl-L-lysyl-[protein] + acetyl-CoA = N(6)-biotinyl-L-lysyl-[protein] + malonyl-CoA. It participates in lipid metabolism; malonyl-CoA biosynthesis; malonyl-CoA from acetyl-CoA: step 1/1. In terms of biological role, component of the acetyl coenzyme A carboxylase (ACC) complex. First, biotin carboxylase catalyzes the carboxylation of biotin on its carrier protein (BCCP) and then the CO(2) group is transferred by the carboxyltransferase to acetyl-CoA to form malonyl-CoA. This chain is Acetyl-coenzyme A carboxylase carboxyl transferase subunit alpha, found in Brucella anthropi (strain ATCC 49188 / DSM 6882 / CCUG 24695 / JCM 21032 / LMG 3331 / NBRC 15819 / NCTC 12168 / Alc 37) (Ochrobactrum anthropi).